We begin with the raw amino-acid sequence, 242 residues long: Type III pantothenate kinase (242 aa).

Position 7 to 14 (7 to 14 (DLGNSRFK)) interacts with ATP. Substrate-binding positions include tyrosine 91 and 98 to 101 (GVDR). Aspartate 100 functions as the Proton acceptor in the catalytic mechanism. Threonine 121 provides a ligand contact to ATP. A substrate-binding site is contributed by threonine 171.

It belongs to the type III pantothenate kinase family. In terms of assembly, homodimer. It depends on NH4(+) as a cofactor. K(+) serves as cofactor.

It localises to the cytoplasm. The catalysed reaction is (R)-pantothenate + ATP = (R)-4'-phosphopantothenate + ADP + H(+). Its pathway is cofactor biosynthesis; coenzyme A biosynthesis; CoA from (R)-pantothenate: step 1/5. Catalyzes the phosphorylation of pantothenate (Pan), the first step in CoA biosynthesis. The chain is Type III pantothenate kinase from Xanthomonas campestris pv. campestris (strain B100).